The chain runs to 119 residues: Holo-[acyl-carrier-protein] synthase (119 aa).

Mg(2+) contacts are provided by D8 and E50.

Belongs to the P-Pant transferase superfamily. AcpS family. Requires Mg(2+) as cofactor.

It localises to the cytoplasm. It catalyses the reaction apo-[ACP] + CoA = holo-[ACP] + adenosine 3',5'-bisphosphate + H(+). In terms of biological role, transfers the 4'-phosphopantetheine moiety from coenzyme A to a Ser of acyl-carrier-protein. The polypeptide is Holo-[acyl-carrier-protein] synthase (Clavibacter sepedonicus (Clavibacter michiganensis subsp. sepedonicus)).